The chain runs to 601 residues: Elongation factor 4 (601 aa).

The tr-type G domain maps to 5 to 187 (SNIRNFSIIA…AIVERLPAPE (183 aa)). Residues 17–22 (DHGKST) and 134–137 (NKID) contribute to the GTP site.

Belongs to the TRAFAC class translation factor GTPase superfamily. Classic translation factor GTPase family. LepA subfamily.

It is found in the cell inner membrane. The catalysed reaction is GTP + H2O = GDP + phosphate + H(+). Required for accurate and efficient protein synthesis under certain stress conditions. May act as a fidelity factor of the translation reaction, by catalyzing a one-codon backward translocation of tRNAs on improperly translocated ribosomes. Back-translocation proceeds from a post-translocation (POST) complex to a pre-translocation (PRE) complex, thus giving elongation factor G a second chance to translocate the tRNAs correctly. Binds to ribosomes in a GTP-dependent manner. The chain is Elongation factor 4 from Oleidesulfovibrio alaskensis (strain ATCC BAA-1058 / DSM 17464 / G20) (Desulfovibrio alaskensis).